Here is a 308-residue protein sequence, read N- to C-terminus: Methionyl-tRNA formyltransferase (308 aa).

Serine 110–proline 113 serves as a coordination point for (6S)-5,6,7,8-tetrahydrofolate.

Belongs to the Fmt family.

It carries out the reaction L-methionyl-tRNA(fMet) + (6R)-10-formyltetrahydrofolate = N-formyl-L-methionyl-tRNA(fMet) + (6S)-5,6,7,8-tetrahydrofolate + H(+). Its function is as follows. Attaches a formyl group to the free amino group of methionyl-tRNA(fMet). The formyl group appears to play a dual role in the initiator identity of N-formylmethionyl-tRNA by promoting its recognition by IF2 and preventing the misappropriation of this tRNA by the elongation apparatus. This Neisseria meningitidis serogroup B (strain ATCC BAA-335 / MC58) protein is Methionyl-tRNA formyltransferase.